The sequence spans 438 residues: Telomeric repeat-binding factor 1 (438 aa).

The segment covering 1-10 has biased composition (polar residues); sequence MAEDVSSTAP. Positions 1–36 are disordered; it reads MAEDVSSTAPSPRGCADGRDADPTEEQMAQTQRNDQ. Ala2 is subject to N-acetylalanine. A Phosphoserine modification is found at Ser11. The segment at 58 to 268 is TRFH dimerization; sequence EEEEEDSGLV…AAAKVVESKR (211 aa). A Glycyl lysine isopeptide (Lys-Gly) (interchain with G-Cter in SUMO2) cross-link involves residue Lys213. Ser219 is modified (phosphoserine; by ATM). Residues 265–378 form an interaction with RLIM region; that stretch reads ESKRTRTITS…PVTPEKHRAR (114 aa). The interval 268–311 is disordered; that stretch reads RTRTITSQDKPSGNDVEMETEANLDTRKSVSDKQSAVTESSEGT. The span at 299–311 shows a compositional bias: polar residues; that stretch reads DKQSAVTESSEGT. Lys325 participates in a covalent cross-link: Glycyl lysine isopeptide (Lys-Gly) (interchain with G-Cter in SUMO2). The segment at 326–375 is disordered; sequence LQHGTQQQDLNKKERRVGTPQSTKKKKESRRATESRIPVSKSQPVTPEKH. Positions 337–356 match the Nuclear localization signal motif; it reads KKERRVGTPQSTKKKKESRR. A Glycyl lysine isopeptide (Lys-Gly) (interchain with G-Cter in SUMO2) cross-link involves residue Lys366. Positions 375 to 432 constitute an HTH myb-type domain; that stretch reads HRARKRQAWLWEEDKNLRSGVRKYGEGNWSKILLHYKFNNRTSVMLKDRWRTMKKLKL. The H-T-H motif DNA-binding region spans 403–428; it reads WSKILLHYKFNNRTSVMLKDRWRTMK.

As to quaternary structure, homodimer; can contain both isoforms. Found in a complex with POT1; TINF2 and TNKS1. Interacts with ATM, TINF2, TNKS1, TNKS2, PINX1, NEK2 and MAPRE1. Component of the shelterin complex (telosome) composed of TERF1, TERF2, TINF2, TERF2IP ACD and POT1. Interacts with RLIM (via N-terminus). Interacts with FBXO4. Interaction with TINF2 protects against interaction with FBXO4 and subsequent polyubiquitination and proteasomal degradation. Interacts with GNL3L; this interaction promotes homodimerization. Interacts with TIN2. Interactions with GNL3L and TIN2 are mutually exclusive. Interacts with RTEL1. Interacts with CCDC79/TERB1. In terms of processing, phosphorylated preferentially on Ser-219 in an ATM-dependent manner in response to ionizing DNA damage. Post-translationally, ADP-ribosylation by TNKS1 or TNKS2 diminishes its ability to bind to telomeric DNA. Ubiquitinated by RLIM/RNF12, leading to its degradation by the proteasome. Ubiquitinated by a SCF (SKP1-CUL1-F-box protein) ubiquitin-protein ligase complex, leading to its degradation by the proteasome.

It localises to the nucleus. The protein localises to the chromosome. Its subcellular location is the telomere. The protein resides in the cytoplasm. It is found in the cytoskeleton. It localises to the spindle. In terms of biological role, binds the telomeric double-stranded 5'-TTAGGG-3' repeat and negatively regulates telomere length. Involved in the regulation of the mitotic spindle. Component of the shelterin complex (telosome) that is involved in the regulation of telomere length and protection. Shelterin associates with arrays of double-stranded 5'-TTAGGG-3' repeats added by telomerase and protects chromosome ends; without its protective activity, telomeres are no longer hidden from the DNA damage surveillance and chromosome ends are inappropriately processed by DNA repair pathways. This Cricetulus griseus (Chinese hamster) protein is Telomeric repeat-binding factor 1 (TERF1).